Here is a 1220-residue protein sequence, read N- to C-terminus: Formin-F (1220 aa).

Over residues 1-10 (MNRIFGRKKK) the composition is skewed to basic residues. The segment at 1–62 (MNRIFGRKKK…TNSKSADKFD (62 aa)) is disordered. The GBD/FH3 domain occupies 6–373 (GRKKKDKDSD…QISVNKPMIG (368 aa)). A compositionally biased stretch (basic and acidic residues) spans 11–20 (DKDSDEKGST). The segment covering 41–56 (AYSSLQPDGNNSTNSK) has biased composition (polar residues). The stretch at 392–428 (VALQSEFQKNIEELAKVKDQLKKANFDLNIANQELSS) forms a coiled coil. Disordered regions lie at residues 461-659 (IDSN…KFTV), 711-732 (SQKK…GTVS), and 1049-1192 (DEAK…KKDI). Low complexity-rich tracts occupy residues 501–518 (SKPP…SSSQ) and 525–554 (SNLS…PQQQ). Residues 532-655 (SDSLSNDFKS…NSNKPPANAP (124 aa)) form the FH1 domain. Residues 555–564 (NIESTLTPEP) show a composition bias toward polar residues. The span at 575 to 638 (TTPPPAPPAP…GKGGPPPPPG (64 aa)) shows a compositional bias: pro residues. The FH2 domain occupies 656-1054 (KFTVSKPTTK…AIKRDEAKAK (399 aa)). Basic and acidic residues predominate over residues 711–722 (SQKKLEASDKKS). Residues 1032–1062 (YKDFQRDKEAAERAIKRDEAKAKKAQQLKRM) are a coiled coil. A compositionally biased stretch (polar residues) spans 1066 to 1083 (IASSTNNKNPLASSSTSV). The DAD domain maps to 1083 to 1158 (VGDGGMVEDI…TPSKSGSRRE (76 aa)). Residues 1117–1142 (DSSSITTISEQSENSNTSSITITTPS) are compositionally biased toward low complexity. Basic and acidic residues predominate over residues 1161–1192 (TSKSSDKDKEKEKEKEKQCESTESEDINKKDI).

Belongs to the formin homology family. Diaphanous subfamily. As to quaternary structure, interacts (via GBD/FH3 domain) with activated Rho-GTPases.

Functionally, formins play an important role in the nucleation of actin and the formation of linear actin filaments. The polypeptide is Formin-F (forF) (Dictyostelium discoideum (Social amoeba)).